Reading from the N-terminus, the 92-residue chain is Small ribosomal subunit protein uS19 (92 aa).

Belongs to the universal ribosomal protein uS19 family.

In terms of biological role, protein S19 forms a complex with S13 that binds strongly to the 16S ribosomal RNA. In Caulobacter vibrioides (strain ATCC 19089 / CIP 103742 / CB 15) (Caulobacter crescentus), this protein is Small ribosomal subunit protein uS19.